The chain runs to 126 residues: Large ribosomal subunit protein bL12 (126 aa).

This sequence belongs to the bacterial ribosomal protein bL12 family. In terms of assembly, homodimer. Part of the ribosomal stalk of the 50S ribosomal subunit. Forms a multimeric L10(L12)X complex, where L10 forms an elongated spine to which 2 to 4 L12 dimers bind in a sequential fashion. Binds GTP-bound translation factors.

Forms part of the ribosomal stalk which helps the ribosome interact with GTP-bound translation factors. Is thus essential for accurate translation. In Geobacter sp. (strain M21), this protein is Large ribosomal subunit protein bL12.